A 572-amino-acid chain; its full sequence is Asparagine synthetase [glutamine-hydrolyzing] 1 (572 aa).

Cys2 acts as the For GATase activity in catalysis. Residues 2–186 (CGIFAAFRHE…PGHVYDSKTD (185 aa)) form the Glutamine amidotransferase type-2 domain. L-glutamine contacts are provided by residues 49 to 53 (RLAIV), 74 to 76 (NGE), and Asp97. An Asparagine synthetase domain is found at 194–546 (PDWLDEKRIP…QKTVADTVMR (353 aa)). Position 233 (Leu233) interacts with ATP. Phosphoserine is present on Ser265. Residues Ile292 and 366 to 367 (SG) contribute to the ATP site. Residue Ser509 is modified to Phosphoserine.

The catalysed reaction is L-aspartate + L-glutamine + ATP + H2O = L-asparagine + L-glutamate + AMP + diphosphate + H(+). It functions in the pathway amino-acid biosynthesis; L-asparagine biosynthesis; L-asparagine from L-aspartate (L-Gln route): step 1/1. This Saccharomyces cerevisiae (strain ATCC 204508 / S288c) (Baker's yeast) protein is Asparagine synthetase [glutamine-hydrolyzing] 1 (ASN1).